The chain runs to 398 residues: Small ribosomal subunit protein uS3m (398 aa).

Belongs to the universal ribosomal protein uS3 family. In terms of assembly, component of the mitochondrial small ribosomal subunit (mt-SSU). Mature yeast 74S mitochondrial ribosomes consist of a small (37S) and a large (54S) subunit. The 37S small subunit contains a 15S ribosomal RNA (15S mt-rRNA) and 34 different proteins. The 54S large subunit contains a 21S rRNA (21S mt-rRNA) and 46 different proteins. uS3m, uS4m and uS5m form the narrow entry site of the mRNA channel.

The protein resides in the mitochondrion. Component of the mitochondrial ribosome (mitoribosome), a dedicated translation machinery responsible for the synthesis of mitochondrial genome-encoded proteins, including at least some of the essential transmembrane subunits of the mitochondrial respiratory chain. The mitoribosomes are attached to the mitochondrial inner membrane and translation products are cotranslationally integrated into the membrane. uS3m is essential for mitochondrial protein synthesis and required for the maturation of small ribosomal subunits. In Saccharomyces cerevisiae (strain ATCC 204508 / S288c) (Baker's yeast), this protein is Small ribosomal subunit protein uS3m (VAR1).